A 426-amino-acid chain; its full sequence is MTSSADLTNLKELLSLYKSLRFSDSAAIEKYNSLVEWGTSTYWKIGVQKVANVETSISDYYDEVKNKPFNIDPGYYIFLPVYFGSVFIYSKGKNMVELGSGNSFQIPDDMRSACNKVLDSDNGIDFLRFVLLNNRWIMEDAISKYQSPVNIFKLASEYGLNIPKYLEIEIEEDTLFDDELYSIIERSFDDKFPKISISYIKLGELRRQVVDFFKFSFMYIESIKVDRIGDNIFIPSVITKSGKKILVKDVDHLIRSKVREHTFVKVKKKNTFSILYDYDGNGTETRGEVIKRIIDTIGRDYYVNGKYFSKVGSAGLKQLTNKLDINECATVDELVDEINKSGTVKRKIKNQSAFDLSRECLGYPEADFITLVNNMRFKIENCKVVNFNIENTNCLNNPSIETIYRNFNQFVSIFNVVTDVKKRLFE.

The protein belongs to the orthopoxvirus OPG148 family. Interacts with the DNA polymerase catalytic subunit OPG071. Interacts with UDG/OPG116. Component of the uracil-DNA glycosylase(UDG)-OPG148-polymerase complex; OPG148 and UDG form a heterodimeric processivity factor that associates with OPG071 to form the processive polymerase holoenzyme. Interacts with OPG117.

Plays an essential role in viral DNA replication by acting as the polymerase processivity factor together with protein OPG116. Serves as a bridge which links the DNA polymerase OPG071 and the uracil DNA glycosylase. This is DNA polymerase processivity factor component OPG148 (OPG148) from Vaccinia virus (strain Copenhagen) (VACV).